The following is a 110-amino-acid chain: Cyclin-dependent protein kinase inhibitor SMR8 (110 aa).

Interacts with CDKA-1 and D-type cyclins. As to expression, expressed in the root vascular tissue.

Functionally, probable cyclin-dependent protein kinase (CDK) inhibitor that functions as a repressor of mitosis in the endoreduplication cell cycle. The polypeptide is Cyclin-dependent protein kinase inhibitor SMR8 (Arabidopsis thaliana (Mouse-ear cress)).